Here is a 437-residue protein sequence, read N- to C-terminus: 23S rRNA (uracil(1939)-C(5))-methyltransferase RlmD (437 aa).

Residues 10 to 68 form the TRAM domain; sequence SAPRNTTFVAEILDLDYQGRGVAKVQGKTWFIENALPQEKVEVRIVDEKRHYGHGISCK. Residues Cys81, Cys87, Cys90, and Cys167 each coordinate [4Fe-4S] cluster. S-adenosyl-L-methionine-binding residues include Gln270, Phe299, Asn304, Glu320, Asn347, and Asp368. Cys394 functions as the Nucleophile in the catalytic mechanism.

Belongs to the class I-like SAM-binding methyltransferase superfamily. RNA M5U methyltransferase family. RlmD subfamily.

The enzyme catalyses uridine(1939) in 23S rRNA + S-adenosyl-L-methionine = 5-methyluridine(1939) in 23S rRNA + S-adenosyl-L-homocysteine + H(+). Catalyzes the formation of 5-methyl-uridine at position 1939 (m5U1939) in 23S rRNA. The sequence is that of 23S rRNA (uracil(1939)-C(5))-methyltransferase RlmD from Pasteurella multocida (strain Pm70).